Reading from the N-terminus, the 331-residue chain is Flagellar P-ring protein (331 aa).

An N-terminal signal peptide occupies residues 1–22 (MRKVTIFIIIIVALTGFGSVRI).

It belongs to the FlgI family. In terms of assembly, the basal body constitutes a major portion of the flagellar organelle and consists of four rings (L,P,S, and M) mounted on a central rod.

The protein resides in the periplasm. It localises to the bacterial flagellum basal body. In terms of biological role, assembles around the rod to form the L-ring and probably protects the motor/basal body from shearing forces during rotation. The polypeptide is Flagellar P-ring protein (Pseudothermotoga lettingae (strain ATCC BAA-301 / DSM 14385 / NBRC 107922 / TMO) (Thermotoga lettingae)).